Here is a 404-residue protein sequence, read N- to C-terminus: Calcium/calmodulin-dependent protein kinase cmkB (404 aa).

The 262-residue stretch at 18–279 folds into the Protein kinase domain; the sequence is YKTGKTLGAG…AHQALQHPWI (262 aa). ATP contacts are provided by residues 24 to 32 and lysine 47; that span reads LGAGLYSVV. The Proton acceptor role is filled by aspartate 141. Position 179 is a phosphothreonine; by cmkC (threonine 179). The segment at 279 to 322 is autoinhibitory domain; sequence INPPYDTTDDLGSGEDLLPNIKKNFNARRTLHKAIDTVRAINKL. The tract at residues 301-323 is calmodulin-binding; it reads KNFNARRTLHKAIDTVRAINKLR. Residues 336-404 are disordered; sequence VDPKPEHVNG…WSRTAPRSER (69 aa). Basic and acidic residues-rich tracts occupy residues 338–370 and 379–389; these read PKPE…DSRS and QIREQERKVKE.

This sequence belongs to the protein kinase superfamily. CAMK Ser/Thr protein kinase family. CaMK subfamily. Post-translationally, phosphorylated by cmkC on Thr-179.

The catalysed reaction is L-seryl-[protein] + ATP = O-phospho-L-seryl-[protein] + ADP + H(+). It carries out the reaction L-threonyl-[protein] + ATP = O-phospho-L-threonyl-[protein] + ADP + H(+). With respect to regulation, activated by Ca(2+)/calmodulin. Binding of calmodulin results in conformational change that relieves intrasteric autoinhibition and allows phosphorylation of Thr-179 within the activation loop by cmkC. Calcium/calmodulin-dependent protein kinase that operates in the calcium-triggered CaMKK-CaMK1 signaling cascade. Required in G1-phase of the cell cycle for proper timing of the initial nuclear division after germination, but not for subsequent mitoses. Required for the normal temporal regulation of nimX activity. The sequence is that of Calcium/calmodulin-dependent protein kinase cmkB from Emericella nidulans (Aspergillus nidulans).